Here is a 446-residue protein sequence, read N- to C-terminus: Coagulation factor VII (446 aa).

The first 24 residues, 1–24 (MVPQAHGLLLLCFLLQLQGPLGTA), serve as a signal peptide directing secretion. The propeptide occupies 25 to 41 (VFITQEEAHGVLHRQRR). One can recognise a Gla domain in the interval 42 to 86 (ANSLLEELWPGSLERECNEEQCSFEEAREIFKSPERTKQFWIVYS). Residues Glu47, Glu48, Glu55, Glu57, Glu60, Glu61, Glu66, Glu67, Glu70, and Glu76 each carry the 4-carboxyglutamate modification. Residues Cys58 and Cys63 are joined by a disulfide bond. The region spanning 87–123 (DGDQCASNPCQNGGTCQDHLKSYVCFCLLDFEGRNCE) is the EGF-like 1; calcium-binding domain. 10 cysteine pairs are disulfide-bonded: Cys91-Cys102, Cys96-Cys111, Cys113-Cys122, Cys132-Cys143, Cys139-Cys153, Cys155-Cys168, Cys176-Cys303, Cys200-Cys205, Cys219-Cys235, and Cys351-Cys370. Ser93 is a glycosylation site (O-linked (Glc...) serine; alternate). An O-linked (Xyl...) serine; alternate glycan is attached at Ser93. The residue at position 104 (Asp104) is a (3R)-3-hydroxyaspartate. The EGF-like 2 domain maps to 128 to 169 (EQLICANENGDCDQYCRDHVGTKRTCSCHEDYTLQPDEVSCK). Asn186 carries N-linked (GlcNAc...) asparagine glycosylation. Residues 194 to 433 (IVGGNVCPKG…YIDWLVRHMD (240 aa)) form the Peptidase S1 domain. His234 acts as the Charge relay system in catalysis. The N-linked (GlcNAc...) asparagine glycan is linked to Asn244. The active-site Charge relay system is the Asp283. Asp379 lines the substrate pocket. Cysteines 381 and 409 form a disulfide. Ser385 acts as the Charge relay system in catalysis.

This sequence belongs to the peptidase S1 family. In terms of assembly, heterodimer of a light chain and a heavy chain linked by a disulfide bond. Post-translationally, the vitamin K-dependent, enzymatic carboxylation of some glutamate residues allows the modified protein to bind calcium. The iron and 2-oxoglutarate dependent 3-hydroxylation of aspartate and asparagine is (R) stereospecific within EGF domains. In terms of processing, can be either O-glucosylated or O-xylosylated at Ser-93 by POGLUT1. Plasma and liver.

The protein localises to the secreted. The enzyme catalyses Selective cleavage of Arg-|-Ile bond in factor X to form factor Xa.. Functionally, initiates the extrinsic pathway of blood coagulation. Serine protease that circulates in the blood in a zymogen form. Factor VII is converted to factor VIIa by factor Xa, factor XIIa, factor IXa, or thrombin by minor proteolysis. In the presence of tissue factor and calcium ions, factor VIIa then converts factor X to factor Xa by limited proteolysis. Factor VIIa also converts factor IX to factor IXa in the presence of tissue factor and calcium. This chain is Coagulation factor VII (F7), found in Mus musculus (Mouse).